Here is a 644-residue protein sequence, read N- to C-terminus: Exoribonuclease 2 (644 aa).

The RNB domain maps to 189–516 (RRDLTALNFV…NHRLLKAIVK (328 aa)). An S1 motif domain is found at 561–643 (DTRFAAEIID…ETRSIIARPV (83 aa)).

The protein belongs to the RNR ribonuclease family. RNase II subfamily.

The protein localises to the cytoplasm. The enzyme catalyses Exonucleolytic cleavage in the 3'- to 5'-direction to yield nucleoside 5'-phosphates.. In terms of biological role, involved in mRNA degradation. Hydrolyzes single-stranded polyribonucleotides processively in the 3' to 5' direction. The sequence is that of Exoribonuclease 2 from Enterobacter sp. (strain 638).